Reading from the N-terminus, the 175-residue chain is Ribosome maturation factor RimM (175 aa).

One can recognise a PRC barrel domain in the interval 93 to 167; sequence DDEFYYSDLI…YIIITLPEVI (75 aa).

Belongs to the RimM family. In terms of assembly, binds ribosomal protein uS19.

It is found in the cytoplasm. Functionally, an accessory protein needed during the final step in the assembly of 30S ribosomal subunit, possibly for assembly of the head region. Essential for efficient processing of 16S rRNA. May be needed both before and after RbfA during the maturation of 16S rRNA. It has affinity for free ribosomal 30S subunits but not for 70S ribosomes. In Ehrlichia chaffeensis (strain ATCC CRL-10679 / Arkansas), this protein is Ribosome maturation factor RimM.